Consider the following 81-residue polypeptide: Elicitor peptide 4 (81 aa).

Positions 1 to 54 (MERGVSYYLWIPFKFIHQTFGSLLLKLLGLRSPSDHSFPEDGEEEVKVVEVSSR) are excised as a propeptide. Residues 57–81 (PGKKNVLKKSRESSGKPGGTNKKPF) form a disordered region.

It belongs to the brassicaceae elicitor peptide family.

Elicitor of plant defense. This chain is Elicitor peptide 4 (PEP4), found in Arabidopsis thaliana (Mouse-ear cress).